The chain runs to 246 residues: Large ribosomal subunit protein uL30-like 1 (246 aa).

Serine 54 carries the phosphoserine modification.

The protein belongs to the universal ribosomal protein uL30 family.

This chain is Large ribosomal subunit protein uL30-like 1 (Rpl7l1), found in Mus musculus (Mouse).